The following is a 99-amino-acid chain: Aspartyl/glutamyl-tRNA(Asn/Gln) amidotransferase subunit C (99 aa).

This sequence belongs to the GatC family. In terms of assembly, heterotrimer of A, B and C subunits.

The enzyme catalyses L-glutamyl-tRNA(Gln) + L-glutamine + ATP + H2O = L-glutaminyl-tRNA(Gln) + L-glutamate + ADP + phosphate + H(+). It carries out the reaction L-aspartyl-tRNA(Asn) + L-glutamine + ATP + H2O = L-asparaginyl-tRNA(Asn) + L-glutamate + ADP + phosphate + 2 H(+). Allows the formation of correctly charged Asn-tRNA(Asn) or Gln-tRNA(Gln) through the transamidation of misacylated Asp-tRNA(Asn) or Glu-tRNA(Gln) in organisms which lack either or both of asparaginyl-tRNA or glutaminyl-tRNA synthetases. The reaction takes place in the presence of glutamine and ATP through an activated phospho-Asp-tRNA(Asn) or phospho-Glu-tRNA(Gln). The polypeptide is Aspartyl/glutamyl-tRNA(Asn/Gln) amidotransferase subunit C (Burkholderia mallei (strain NCTC 10247)).